The primary structure comprises 140 residues: Putative cell wall protein (140 aa).

Residues 1–21 form the signal peptide; that stretch reads MASSLITSAVIVVVLSLVLGS. Gly residues predominate over residues 85-98; that stretch reads TGGGIPSYNGGQGA. The interval 85–140 is disordered; it reads TGGGIPSYNGGQGAGPHTQLPGGDDTLVPNPGFEAPTPTIGAGTGSNGQVPPVPLP.

In terms of tissue distribution, inflorescence.

It localises to the secreted. Its subcellular location is the cell wall. This is Putative cell wall protein from Arabidopsis thaliana (Mouse-ear cress).